The chain runs to 106 residues: Large ribosomal subunit protein P2 (106 aa).

Positions Gly79–Asp106 are disordered. Positions Pro91–Met100 are enriched in acidic residues.

Belongs to the eukaryotic ribosomal protein P1/P2 family. As to quaternary structure, P1 and P2 exist as dimers at the large ribosomal subunit. In terms of processing, phosphorylated.

In terms of biological role, plays an important role in the elongation step of protein synthesis. The sequence is that of Large ribosomal subunit protein P2 (LIP) from Leishmania infantum.